An 884-amino-acid chain; its full sequence is Formin-like protein 9 (884 aa).

An N-terminal signal peptide occupies residues 1–19 (MGMAMRCVLVLFSVSPVLL). A helical transmembrane segment spans residues 140–160 (IVALGVVGLCLVVLGVVIAAF). Disordered stretches follow at residues 179-204 (FHHGSRDQRSPAATRKVSSHPSPDPL), 295-318 (THDSPSDSSYQSLSPDCTSRLSPK), and 403-473 (TMTN…PLPR). Low complexity predominate over residues 300–310 (SDSSYQSLSPD). Over residues 429–443 (KPAPPPPPQKNPPPN) the composition is skewed to pro residues. The region spanning 464–884 (VGKDGSPLPR…QTLNLVLPLK (421 aa)) is the FH2 domain.

This sequence belongs to the formin-like family. Class-I subfamily.

It is found in the membrane. This is Formin-like protein 9 (FH9) from Oryza sativa subsp. indica (Rice).